The following is a 234-amino-acid chain: Leucyl/phenylalanyl-tRNA--protein transferase (234 aa).

It belongs to the L/F-transferase family.

The protein resides in the cytoplasm. The catalysed reaction is N-terminal L-lysyl-[protein] + L-leucyl-tRNA(Leu) = N-terminal L-leucyl-L-lysyl-[protein] + tRNA(Leu) + H(+). It carries out the reaction N-terminal L-arginyl-[protein] + L-leucyl-tRNA(Leu) = N-terminal L-leucyl-L-arginyl-[protein] + tRNA(Leu) + H(+). The enzyme catalyses L-phenylalanyl-tRNA(Phe) + an N-terminal L-alpha-aminoacyl-[protein] = an N-terminal L-phenylalanyl-L-alpha-aminoacyl-[protein] + tRNA(Phe). Its function is as follows. Functions in the N-end rule pathway of protein degradation where it conjugates Leu, Phe and, less efficiently, Met from aminoacyl-tRNAs to the N-termini of proteins containing an N-terminal arginine or lysine. This is Leucyl/phenylalanyl-tRNA--protein transferase from Salmonella paratyphi A (strain ATCC 9150 / SARB42).